A 146-amino-acid polypeptide reads, in one-letter code: Ribonuclease H (146 aa).

Residues 1–138 form the RNase H type-1 domain; that stretch reads MYAWTDGACR…ADALANRGID (138 aa). Residues D6, E44, D66, and D130 each contribute to the Mg(2+) site.

Belongs to the RNase H family. Monomer. Mg(2+) is required as a cofactor.

The protein localises to the cytoplasm. The enzyme catalyses Endonucleolytic cleavage to 5'-phosphomonoester.. Endonuclease that specifically degrades the RNA of RNA-DNA hybrids. This chain is Ribonuclease H, found in Alkalilimnicola ehrlichii (strain ATCC BAA-1101 / DSM 17681 / MLHE-1).